Consider the following 81-residue polypeptide: MSSKVQAVLLLVGVITFLAVHAQEELSENTESERSCARLYERCSMTRRPCCNNVPYVCSLLGTYCECKKGLIQTVGDFIGI.

The first 22 residues, 1–22, serve as a signal peptide directing secretion; that stretch reads MSSKVQAVLLLVGVITFLAVHA. The propeptide occupies 23–34; it reads QEELSENTESER. 3 disulfides stabilise this stretch: C36-C51, C50-C67, and C58-C65.

The protein belongs to the neurotoxin 02 (plectoxin) family. As to expression, expressed by the venom gland.

The protein resides in the secreted. This is U17-lycotoxin-Ls1a from Lycosa singoriensis (Wolf spider).